The sequence spans 137 residues: Nucleoside diphosphate kinase (137 aa).

Positions 11, 59, 87, 93, 104, and 114 each coordinate ATP. The active-site Pros-phosphohistidine intermediate is histidine 117.

It belongs to the NDK family. Homotetramer. Mg(2+) is required as a cofactor.

The protein localises to the cytoplasm. The catalysed reaction is a 2'-deoxyribonucleoside 5'-diphosphate + ATP = a 2'-deoxyribonucleoside 5'-triphosphate + ADP. It catalyses the reaction a ribonucleoside 5'-diphosphate + ATP = a ribonucleoside 5'-triphosphate + ADP. Its function is as follows. Major role in the synthesis of nucleoside triphosphates other than ATP. The ATP gamma phosphate is transferred to the NDP beta phosphate via a ping-pong mechanism, using a phosphorylated active-site intermediate. The chain is Nucleoside diphosphate kinase from Parafrankia sp. (strain EAN1pec).